Reading from the N-terminus, the 876-residue chain is Valine--tRNA ligase (876 aa).

A 'HIGH' region motif is present at residues 44–54 (PNVTGKLHLGH). Residues 520-524 (KMSKS) carry the 'KMSKS' region motif. An ATP-binding site is contributed by Lys-523. The stretch at 805-876 (LEGLIDMDKE…VKARIEQLKA (72 aa)) forms a coiled coil.

It belongs to the class-I aminoacyl-tRNA synthetase family. ValS type 1 subfamily. As to quaternary structure, monomer.

Its subcellular location is the cytoplasm. The catalysed reaction is tRNA(Val) + L-valine + ATP = L-valyl-tRNA(Val) + AMP + diphosphate. In terms of biological role, catalyzes the attachment of valine to tRNA(Val). As ValRS can inadvertently accommodate and process structurally similar amino acids such as threonine, to avoid such errors, it has a 'posttransfer' editing activity that hydrolyzes mischarged Thr-tRNA(Val) in a tRNA-dependent manner. This is Valine--tRNA ligase from Staphylococcus aureus (strain MRSA252).